The primary structure comprises 177 residues: Ribonuclease M5 (177 aa).

The region spanning 5 to 99 is the Toprim domain; the sequence is KQIIIVEGKT…NKTSKKIGIA (95 aa). Residues Glu11, Asp59, and Asp61 each coordinate Mg(2+).

This sequence belongs to the ribonuclease M5 family. The cofactor is Mg(2+).

The protein resides in the cytoplasm. It catalyses the reaction Endonucleolytic cleavage of RNA, removing 21 and 42 nucleotides, respectively, from the 5'- and 3'-termini of a 5S-rRNA precursor.. Functionally, required for correct processing of both the 5' and 3' ends of 5S rRNA precursor. Cleaves both sides of a double-stranded region yielding mature 5S rRNA in one step. In Mycoplasma mycoides subsp. mycoides SC (strain CCUG 32753 / NCTC 10114 / PG1), this protein is Ribonuclease M5.